A 562-amino-acid polypeptide reads, in one-letter code: MNVFGKKEEKQEKVYSLQNGFPYSHHPYASQYSRPDGPILLQDFHLLENIASFDRERVPERVVHAKGGGCRLEFELTDSLSDITYAAPYQNVGYKCPGLVRFSTVGGESGTPDTARDPRGVSFKFYTEWGNHDWVFNNTPVFFLRDAIKFPVFIHSQKRDPQSHLNQFQDTTIYWDYLTLNPESIHQITYMFGDRGTPASWASMNAYSGHSFIMVNKEGKDTYVQFHVLSDTGFETLTGDKAAELSGSHPDYNQTKLFTQLQNGEKPKFNCYVQTMTPEQATKFRYSVNDLTKIWPHKEFPLRKFGTITLTENVDNYFQEIEQVAFSPTNTCIPGIKPSNDSVLQARLFSYPDTQRHRLGANYQQLPVNRPRNLGCPYSKGDSQYTAEQCPFKAVNFQRDGPMSYYNFGPEPNYISSLPNQTLKFKNEDNDEVSDKFKGIVLDEVTEVSVRKQEQDQIRNEHIVDAKINQYYYVYGISPLDFEQPRALYEKVYNDEQKKLFVHNVVCHACKIKDPKVKKRVTQYFGLLNEDLGKVIAEGLGVPWEPVDLEGYAKTWSIASAN.

Active-site residues include His-64 and Asn-137. Tyr-351 is a heme binding site.

Belongs to the catalase family. In terms of assembly, homotetramer. It depends on heme as a cofactor.

Its subcellular location is the cytoplasm. It catalyses the reaction 2 H2O2 = O2 + 2 H2O. In terms of biological role, occurs in almost all aerobically respiring organisms and serves to protect cells from the toxic effects of hydrogen peroxide. The protein is Catalase T (CTT1) of Saccharomyces cerevisiae (strain YJM789) (Baker's yeast).